A 287-amino-acid polypeptide reads, in one-letter code: Bifunctional protein FolD (287 aa).

NADP(+)-binding positions include 166–168 (GAS) and I232.

It belongs to the tetrahydrofolate dehydrogenase/cyclohydrolase family. As to quaternary structure, homodimer.

The enzyme catalyses (6R)-5,10-methylene-5,6,7,8-tetrahydrofolate + NADP(+) = (6R)-5,10-methenyltetrahydrofolate + NADPH. The catalysed reaction is (6R)-5,10-methenyltetrahydrofolate + H2O = (6R)-10-formyltetrahydrofolate + H(+). It functions in the pathway one-carbon metabolism; tetrahydrofolate interconversion. Functionally, catalyzes the oxidation of 5,10-methylenetetrahydrofolate to 5,10-methenyltetrahydrofolate and then the hydrolysis of 5,10-methenyltetrahydrofolate to 10-formyltetrahydrofolate. In Pectobacterium atrosepticum (strain SCRI 1043 / ATCC BAA-672) (Erwinia carotovora subsp. atroseptica), this protein is Bifunctional protein FolD.